An 810-amino-acid polypeptide reads, in one-letter code: DNA-binding protein REB1 (810 aa).

2 stretches are compositionally biased toward basic and acidic residues: residues 1 to 10 (MPSGHNDKNA) and 29 to 44 (HQNHDPQLHTKDLENK). Disordered regions lie at residues 1-80 (MPSG…ENIS), 114-161 (NQQD…GVDD), 180-243 (NNNN…TNND), 294-313 (HGLNHQNKNHNDDTDDLSNS), and 346-365 (QDTQPHQQKSPSHDNEAGSV). Composition is skewed to low complexity over residues 51–64 (IVESSSDVDVNNND) and 124–135 (NNNTDNGNDSNN). Basic and acidic residues predominate over residues 149 to 161 (DKNKKDAGVGVDD). Over residues 180–191 (NNNNNNSIANDS) the composition is skewed to low complexity. A compositionally biased stretch (basic and acidic residues) spans 198 to 208 (HDNGNNHENSQ). Over residues 346–355 (QDTQPHQQKS) the composition is skewed to polar residues. Serine 355 bears the Phosphoserine mark. One can recognise an HTH myb-type domain in the interval 470 to 523 (HIFEQRGKWTAEEEQELAKLCAEKEGQWAEIGKTLGRMPEDCRDRWRNYVKCGT). The H-T-H motif DNA-binding region spans 497–519 (WAEIGKTLGRMPEDCRDRWRNYV). Residues 572 to 667 (QNDHRNNDED…STHSKSLSNT (96 aa)) form a disordered region. Low complexity predominate over residues 586–606 (ASAAAAAAAAIQEQQQLLQQK). Positions 627 to 636 (DNKDEDKPHD) are enriched in basic and acidic residues. Over residues 643–667 (DDNSQNSMVPAPSATSTHSKSLSNT) the composition is skewed to polar residues. Residues 692-717 (NWTIVSERMGGTRSRIQCRYKWNKLV) enclose the Myb-like domain. A Glycyl lysine isopeptide (Lys-Gly) (interchain with G-Cter in SUMO) cross-link involves residue lysine 807.

The protein resides in the nucleus. Its function is as follows. DNA-binding protein that recognizes sites within both the enhancer and the promoter of rRNA transcription, as well as upstream of many genes transcribed by RNA polymerase II. It is essential for cell growth. May stimulate or inhibit transcription. Specifically recognizes the sequence 5'-CCGGGTA-3' or 5'-CGGGTRR-3' (where R is any purine). A member of the general regulatory factors (GRFs) which act as genome partitioners. Acts as a chromatin insulator which are known as STARs (Subtelomeric anti-silencing region). STARs prevent negative or positive transcription influence by extending across chromatin to a promoter. The protein is DNA-binding protein REB1 (REB1) of Saccharomyces cerevisiae (strain ATCC 204508 / S288c) (Baker's yeast).